The sequence spans 306 residues: Oxygen-dependent coproporphyrinogen-III oxidase (306 aa).

A substrate-binding site is contributed by S94. 2 residues coordinate a divalent metal cation: H98 and H108. The active-site Proton donor is the H108. Residue 110-112 coordinates substrate; the sequence is NVR. Residues H147 and H177 each contribute to the a divalent metal cation site. Residues 242 to 277 form an important for dimerization region; that stretch reads YVEFNLVYDRGTLFGLQTGGRTESILMSMPPLVRWE. 260-262 provides a ligand contact to substrate; the sequence is GGR.

It belongs to the aerobic coproporphyrinogen-III oxidase family. In terms of assembly, homodimer. It depends on a divalent metal cation as a cofactor.

It localises to the cytoplasm. The catalysed reaction is coproporphyrinogen III + O2 + 2 H(+) = protoporphyrinogen IX + 2 CO2 + 2 H2O. It participates in porphyrin-containing compound metabolism; protoporphyrin-IX biosynthesis; protoporphyrinogen-IX from coproporphyrinogen-III (O2 route): step 1/1. In terms of biological role, involved in the heme biosynthesis. Catalyzes the aerobic oxidative decarboxylation of propionate groups of rings A and B of coproporphyrinogen-III to yield the vinyl groups in protoporphyrinogen-IX. In Shewanella woodyi (strain ATCC 51908 / MS32), this protein is Oxygen-dependent coproporphyrinogen-III oxidase.